A 267-amino-acid polypeptide reads, in one-letter code: 3-methyl-2-oxobutanoate hydroxymethyltransferase (267 aa).

Positions 46 and 85 each coordinate Mg(2+). 3-methyl-2-oxobutanoate-binding positions include 46 to 47 (DS), D85, and K115. E117 serves as a coordination point for Mg(2+). Catalysis depends on E184, which acts as the Proton acceptor.

It belongs to the PanB family. In terms of assembly, homodecamer; pentamer of dimers. Mg(2+) serves as cofactor.

Its subcellular location is the cytoplasm. It carries out the reaction 3-methyl-2-oxobutanoate + (6R)-5,10-methylene-5,6,7,8-tetrahydrofolate + H2O = 2-dehydropantoate + (6S)-5,6,7,8-tetrahydrofolate. The protein operates within cofactor biosynthesis; (R)-pantothenate biosynthesis; (R)-pantoate from 3-methyl-2-oxobutanoate: step 1/2. Catalyzes the reversible reaction in which hydroxymethyl group from 5,10-methylenetetrahydrofolate is transferred onto alpha-ketoisovalerate to form ketopantoate. This Geotalea uraniireducens (strain Rf4) (Geobacter uraniireducens) protein is 3-methyl-2-oxobutanoate hydroxymethyltransferase.